Consider the following 443-residue polypeptide: Glutamyl-tRNA reductase (443 aa).

Substrate-binding positions include 49-52, S109, 114-116, and Q120; these read TCNR and EPQ. The Nucleophile role is filled by C50. Position 189–194 (189–194) interacts with NADP(+); the sequence is GAGKMC. A disordered region spans residues 421-443; that stretch reads PDSQQTGGDSVEKDADSKQDLTS. The span at 430–443 shows a compositional bias: basic and acidic residues; the sequence is SVEKDADSKQDLTS.

It belongs to the glutamyl-tRNA reductase family. In terms of assembly, homodimer.

The enzyme catalyses (S)-4-amino-5-oxopentanoate + tRNA(Glu) + NADP(+) = L-glutamyl-tRNA(Glu) + NADPH + H(+). It participates in porphyrin-containing compound metabolism; protoporphyrin-IX biosynthesis; 5-aminolevulinate from L-glutamyl-tRNA(Glu): step 1/2. Functionally, catalyzes the NADPH-dependent reduction of glutamyl-tRNA(Glu) to glutamate 1-semialdehyde (GSA). The protein is Glutamyl-tRNA reductase of Syntrophotalea carbinolica (strain DSM 2380 / NBRC 103641 / GraBd1) (Pelobacter carbinolicus).